The following is a 66-amino-acid chain: Sec-independent protein translocase protein TatA (66 aa).

The chain crosses the membrane as a helical span at residues 1–21 (MSIGIWQIAIVVILVVLLFGR). The tract at residues 43-66 (ATDITDEPEPKNVSENNQDSKDKE) is disordered. The span at 50–66 (PEPKNVSENNQDSKDKE) shows a compositional bias: basic and acidic residues.

It belongs to the TatA/E family. As to quaternary structure, the Tat system comprises two distinct complexes: a TatABC complex, containing multiple copies of TatA, TatB and TatC subunits, and a separate TatA complex, containing only TatA subunits. Substrates initially bind to the TatABC complex, which probably triggers association of the separate TatA complex to form the active translocon.

The protein localises to the cell inner membrane. Functionally, part of the twin-arginine translocation (Tat) system that transports large folded proteins containing a characteristic twin-arginine motif in their signal peptide across membranes. TatA could form the protein-conducting channel of the Tat system. In Pelagibacter ubique (strain HTCC1062), this protein is Sec-independent protein translocase protein TatA.